The primary structure comprises 387 residues: Phosphoglycerate kinase (387 aa).

Residues 21 to 23 (DLN), arginine 36, 59 to 62 (HLGR), arginine 113, and arginine 146 contribute to the substrate site. ATP-binding positions include lysine 197, glutamate 314, and 340 to 343 (GGDT).

The protein belongs to the phosphoglycerate kinase family. In terms of assembly, monomer.

The protein resides in the cytoplasm. It carries out the reaction (2R)-3-phosphoglycerate + ATP = (2R)-3-phospho-glyceroyl phosphate + ADP. Its pathway is carbohydrate degradation; glycolysis; pyruvate from D-glyceraldehyde 3-phosphate: step 2/5. The polypeptide is Phosphoglycerate kinase (Aeromonas salmonicida (strain A449)).